Here is a 262-residue protein sequence, read N- to C-terminus: Acyl-[acyl-carrier-protein]--UDP-N-acetylglucosamine O-acyltransferase (262 aa).

The protein belongs to the transferase hexapeptide repeat family. LpxA subfamily. Homotrimer.

The protein resides in the cytoplasm. The enzyme catalyses a (3R)-hydroxyacyl-[ACP] + UDP-N-acetyl-alpha-D-glucosamine = a UDP-3-O-[(3R)-3-hydroxyacyl]-N-acetyl-alpha-D-glucosamine + holo-[ACP]. The protein operates within glycolipid biosynthesis; lipid IV(A) biosynthesis; lipid IV(A) from (3R)-3-hydroxytetradecanoyl-[acyl-carrier-protein] and UDP-N-acetyl-alpha-D-glucosamine: step 1/6. Functionally, involved in the biosynthesis of lipid A, a phosphorylated glycolipid that anchors the lipopolysaccharide to the outer membrane of the cell. The sequence is that of Acyl-[acyl-carrier-protein]--UDP-N-acetylglucosamine O-acyltransferase from Vibrio atlanticus (strain LGP32) (Vibrio splendidus (strain Mel32)).